The chain runs to 494 residues: MASGILVNIKEEVTCPICLELLTEPLSLDCGHSFCQACITANHKESTPHQGERSCPLCRMSYPSENLRPNRHLANIVERLKEVMLSPEEGQKVGHCARHGEKLLLFCEQDGNVICWLCERSQEHRGHHTLLVEEVAEKYQEKLQVALEMMRQKQQDAEKLEADVREEQASWKIQIRNDKTNIMAEFKQLRDILDCEESKELQNLEKEEKNILKRLVQSESDMVLQTQSMRVLISDLERRLQGSVLELLQGVDDVIKRIETVTLQKPKTFLNEKRRVFRAPDLKAMLQAFKELTEVQRYWAHVTLVPSHPSYAVISEDERQVRYQFQIHQPSVKVNYFYGVLGSPSITSGKHYWEVDVTNKRDWILGICVSFKCNAKWNVLRPENYQPKNGYWVIGLQNTNNYSAFQDAVKYSDFQIGSRSTASVPLIVPLFMTIYPNRVGVFLDYEACTVSFFNVTNNGFLIYKFSNCHFSYPVFPYFSPMTCELPMTLCSPSS.

Residue A2 is modified to N-acetylalanine. An RING-type zinc finger spans residues C15 to R59. S86 carries the post-translational modification Phosphoserine. A B box-type zinc finger spans residues Q91–V132. Positions 96, 99, 118, and 124 each coordinate Zn(2+). Residues L131–V223 adopt a coiled-coil conformation. Positions F186–K199 are required for interaction with GABARAP and for autophagy. The B30.2/SPRY domain maps to P280–S494.

This sequence belongs to the TRIM/RBCC family. As to quaternary structure, can form homodimers and homotrimers. In addition to lower-order dimerization, also exhibits a higher-order multimerization and both low- and high-order multimerizations are essential for its restriction activity. Interacts with BTBD1 and BTBD2. Interacts with PSMC4, PSMC5, PSMD7 and HSPA8/HSC70. Interacts (via B30.2/SPRY domain) with HSPA1A/B. Interacts with PSMC2, MAP3K7/TAK1, TAB2 and TAB3. Interacts with SQSTM1. Interacts with TRIM6 and TRIM34. Interacts with ULK1 (phosphorylated form), GABARAP, GABARAPL1, GABARAPL2, MAP1LC3A, MAP1LC3C and BECN1. Degraded in a proteasome-independent fashion in the absence of viral infection but in a proteasome-dependent fashion following exposure to restriction sensitive virus. In terms of processing, autoubiquitinated in a RING finger- and UBE2D2-dependent manner. Monoubiquitinated by TRIM21. Deubiquitinated by Yersinia YopJ. Ubiquitination may not lead to proteasomal degradation.

Its subcellular location is the cytoplasm. The protein resides in the nucleus. The enzyme catalyses S-ubiquitinyl-[E2 ubiquitin-conjugating enzyme]-L-cysteine + [acceptor protein]-L-lysine = [E2 ubiquitin-conjugating enzyme]-L-cysteine + N(6)-ubiquitinyl-[acceptor protein]-L-lysine.. It participates in protein modification; protein ubiquitination. Capsid-specific restriction factor that prevents infection from non-host-adapted retroviruses. Blocks viral replication early in the life cycle, after viral entry but before reverse transcription. In addition to acting as a capsid-specific restriction factor, also acts as a pattern recognition receptor that activates innate immune signaling in response to the retroviral capsid lattice. Binding to the viral capsid triggers its E3 ubiquitin ligase activity, and in concert with the heterodimeric ubiquitin conjugating enzyme complex UBE2V1-UBE2N (also known as UBC13-UEV1A complex) generates 'Lys-63'-linked polyubiquitin chains, which in turn are catalysts in the autophosphorylation of the MAP3K7/TAK1 complex (includes TAK1, TAB2, and TAB3). Activation of the MAP3K7/TAK1 complex by autophosphorylation results in the induction and expression of NF-kappa-B and MAPK-responsive inflammatory genes, thereby leading to an innate immune response in the infected cell. Plays a role in regulating autophagy through activation of autophagy regulator BECN1 by causing its dissociation from its inhibitors BCL2 and TAB2. In Saguinus labiatus (Red-chested mustached tamarin), this protein is Tripartite motif-containing protein 5 (TRIM5).